A 436-amino-acid chain; its full sequence is Bifunctional IPC transferase and DIPP synthase (436 aa).

Residues 11–241 (GVGAAVLAAG…LSEEMVLGWA (231 aa)) are mobA-like NTP transferase. CTP is bound by residues 17–19 (LAA) and Lys-32. The segment at 242-435 (ASGNDGPVSR…RRLLALKRGR (194 aa)) is CDP-alcohol phosphatidyltransferases. 3 helical membrane passes run 275 to 295 (VSLL…AGRL), 349 to 371 (AGTR…VSYT), and 397 to 417 (LAVL…LATG).

In the N-terminal section; belongs to the MobA family. This sequence in the C-terminal section; belongs to the CDP-alcohol phosphatidyltransferase class-I family.

It localises to the membrane. It catalyses the reaction 1D-myo-inositol 3-phosphate + CTP + H(+) = CDP-1L-myo-inositol + diphosphate. The enzyme catalyses CDP-1L-myo-inositol + 1D-myo-inositol 3-phosphate = bis(1L-myo-inositol) 3,1'-phosphate 1-phosphate + CMP + H(+). Its function is as follows. Involved in biosynthesis of di-myo-inositol phosphate (DIP), a widespread organic solute in microorganisms adapted to hot environments. Catalyzes the condensation of CTP and L-myo-inositol-1-phosphate into CDP-L-myo-inositol, as well as the biosynthesis of di-myo-inositol-1,3'-phosphate-1'-phosphate (DIPP) from CDP-L-myo-inositol and L-myo-inositol-1-phosphate. In Rubrobacter xylanophilus (strain DSM 9941 / JCM 11954 / NBRC 16129 / PRD-1), this protein is Bifunctional IPC transferase and DIPP synthase.